The following is a 496-amino-acid chain: Solute carrier family 2, facilitated glucose transporter member 3 (496 aa).

At 1-11 the chain is on the cytoplasmic side; that stretch reads MADKKKITASL. Residues 12–33 traverse the membrane as a helical segment; it reads IYAVSVAAIGSLQFGYNTGVIN. The Extracellular segment spans residues 34–65; it reads APEKIIQAFYNRTLSQRSGETISPELLTSLWS. N44 carries an N-linked (GlcNAc...) asparagine glycan. A helical transmembrane segment spans residues 66 to 86; sequence LSVAIFSVGGMIGSFSVSLFF. Topologically, residues 87 to 91 are cytoplasmic; it reads NRFGR. A helical transmembrane segment spans residues 92–112; that stretch reads RNSMLLVNVLAFAGGALMALS. Residues 113–119 lie on the Extracellular side of the membrane; the sequence is KIAKAVE. A helical membrane pass occupies residues 120–143; it reads MLIIGRFIIGLFCGLCTGFVPMYI. Topologically, residues 144–154 are cytoplasmic; it reads SEVSPTSLRGA. The helical transmembrane segment at 155–175 threads the bilayer; sequence FGTLNQLGIVVGILVAQIFGL. Q160 contributes to the D-glucose binding site. Residues 176-184 are Extracellular-facing; the sequence is EGIMGTEAL. The chain crosses the membrane as a helical span at residues 185 to 205; it reads WPLLLGFTIVPAVLQCVALLF. At 206–270 the chain is on the cytoplasmic side; it reads CPESPRFLLI…LFRSPNYRQP (65 aa). The chain crosses the membrane as a helical span at residues 271 to 291; that stretch reads IIISITLQLSQQLSGINAVFY. Residues 278 to 280 form an important for selectivity against fructose region; the sequence is QLS. D-glucose is bound by residues 281–282 and N287; that span reads QQ. Residues 292 to 305 are Extracellular-facing; it reads YSTGIFERAGITQP. The chain crosses the membrane as a helical span at residues 306–326; it reads VYATIGAGVVNTVFTVVSLFL. N316 lines the D-glucose pocket. Residues 327–332 lie on the Cytoplasmic side of the membrane; the sequence is VERAGR. The helical transmembrane segment at 333–353 threads the bilayer; the sequence is RTLHLVGLGGMAVCAAVMTIA. Topologically, residues 354-362 are extracellular; that stretch reads LALKEKWIR. The helical transmembrane segment at 363–388 threads the bilayer; sequence YISIVATFGFVALFEIGPGPIPWFIV. E377 and W385 together coordinate D-glucose. The Cytoplasmic segment spans residues 389–398; that stretch reads AELFSQGPRP. Residues 399–419 form a helical membrane-spanning segment; sequence AAMAVAGCSNWTSNFLVGMLF. The Extracellular segment spans residues 420–428; sequence PYAEKLCGP. A helical transmembrane segment spans residues 429–449; sequence YVFLIFLVFLLIFFIFTYFKV. At 450–496 the chain is on the cytoplasmic side; sequence PETKGRTFEDISRGFEEQVETSSPSSPPIEKNPMVEMNSIEPDKEVA. Residues 464–496 form a disordered region; that stretch reads FEEQVETSSPSSPPIEKNPMVEMNSIEPDKEVA.

Belongs to the major facilitator superfamily. Sugar transporter (TC 2.A.1.1) family. Glucose transporter subfamily.

The protein resides in the cell membrane. The protein localises to the perikaryon. It localises to the cell projection. It catalyses the reaction D-glucose(out) = D-glucose(in). The enzyme catalyses D-galactose(in) = D-galactose(out). With respect to regulation, deoxyglucose transport is inhibited by D-glucose, D-galactose and maltose. Galactose transport is inhibited by D-glucose and maltose. In terms of biological role, facilitative glucose transporter. Can also mediate the uptake of various other monosaccharides across the cell membrane. Mediates the uptake of glucose, 2-deoxyglucose, galactose, mannose, xylose and fucose, and probably also dehydroascorbate. Does not mediate fructose transport. Required for mesendoderm differentiation. The sequence is that of Solute carrier family 2, facilitated glucose transporter member 3 from Gallus gallus (Chicken).